Reading from the N-terminus, the 210-residue chain is Holliday junction branch migration complex subunit RuvA (210 aa).

The domain I stretch occupies residues 1–70; that stretch reads MISYLKGNPI…DEQPILYGFA (70 aa). The interval 71–149 is domain II; sequence TAAERELFRQ…QWRKLVGITL (79 aa). A flexible linker region spans residues 150-160; the sequence is PSTSAIPSLEV. The interval 160–210 is domain III; sequence VLEDVEMTLLALGYTNEEINKAISTLSQDNQMLKNTNSEEWIREAIAWLSQ.

It belongs to the RuvA family. As to quaternary structure, homotetramer. Forms an RuvA(8)-RuvB(12)-Holliday junction (HJ) complex. HJ DNA is sandwiched between 2 RuvA tetramers; dsDNA enters through RuvA and exits via RuvB. An RuvB hexamer assembles on each DNA strand where it exits the tetramer. Each RuvB hexamer is contacted by two RuvA subunits (via domain III) on 2 adjacent RuvB subunits; this complex drives branch migration. In the full resolvosome a probable DNA-RuvA(4)-RuvB(12)-RuvC(2) complex forms which resolves the HJ.

It is found in the cytoplasm. The RuvA-RuvB-RuvC complex processes Holliday junction (HJ) DNA during genetic recombination and DNA repair, while the RuvA-RuvB complex plays an important role in the rescue of blocked DNA replication forks via replication fork reversal (RFR). RuvA specifically binds to HJ cruciform DNA, conferring on it an open structure. The RuvB hexamer acts as an ATP-dependent pump, pulling dsDNA into and through the RuvAB complex. HJ branch migration allows RuvC to scan DNA until it finds its consensus sequence, where it cleaves and resolves the cruciform DNA. The sequence is that of Holliday junction branch migration complex subunit RuvA from Rippkaea orientalis (strain PCC 8801 / RF-1) (Cyanothece sp. (strain PCC 8801)).